The following is a 1152-amino-acid chain: P3N-PIPO polyprotein (1152 aa).

The 146-residue stretch at 292-437 (VMNQQTLTAL…HTLTHRMVQY (146 aa)) folds into the Peptidase S30 domain. Active-site for P1 proteinase activity residues include histidine 345, aspartate 354, and serine 388. The short motif at 489–492 (KITC) is the Involved in interaction with stylet and aphid transmission element. The Involved in virions binding and aphid transmission motif lies at 747-749 (PTK). One can recognise a Peptidase C6 domain in the interval 773–895 (MFVAKDGYCY…ESEMQHYRVG (123 aa)). Active-site for helper component proteinase activity residues include cysteine 781 and histidine 854.

The protein belongs to the potyviridae P3N-PIPO polyprotein family. In terms of assembly, interacts (via PIPO domain) with host PCaP1 protein; this interaction may help to anchor the movement complex to the plasma membrane from which the complex could move to the plasmodesmata. In terms of processing, potyviral RNA is expressed as two polyproteins which undergo post-translational proteolytic processing. Genome polyprotein is processed by NIa-pro, P1 and HC-pro proteinases resulting in the production of at least ten individual proteins. P3N-PIPO is cleaved by P1 and HC-pro proteinases resulting in the production of three individual proteins. The P1 proteinase and the HC-pro cleave only their respective C-termini autocatalytically.

It localises to the host cell junction. It is found in the host plasmodesma. The catalysed reaction is Hydrolyzes a Gly-|-Gly bond at its own C-terminus, commonly in the sequence -Tyr-Xaa-Val-Gly-|-Gly, in the processing of the potyviral polyprotein.. Functionally, required for aphid transmission and also has proteolytic activity. Only cleaves a Gly-Gly dipeptide at its own C-terminus. Interacts with virions and aphid stylets. Acts as a suppressor of RNA-mediated gene silencing, also known as post-transcriptional gene silencing (PTGS), a mechanism of plant viral defense that limits the accumulation of viral RNAs. May have RNA-binding activity. In terms of biological role, allows efficient cell to cell propagation, by bypassing the host cell wall barrier. Transports viral genome to neighboring plant cells directly through plasmosdesmata, without any budding. The chain is P3N-PIPO polyprotein from Carthamus tinctorius (Safflower).